A 263-amino-acid chain; its full sequence is Lens fiber major intrinsic protein (263 aa).

Topologically, residues Met1–Ala12 are cytoplasmic. Residues Ile13–Ala30 form a helical membrane-spanning segment. Residues Ser31–His40 lie on the Extracellular side of the membrane. A helical transmembrane segment spans residues Val41–Val59. The Cytoplasmic portion of the chain corresponds to Gly60–Ser63. Residues Gly64–Leu76 constitute an intramembrane region (discontinuously helical). The short motif at Asn68–Ala70 is the NPA 1 element. Over Val77–Arg85 the chain is Cytoplasmic. Residues Ala86–Ser106 traverse the membrane as a helical segment. Residues Val107–Ser126 lie on the Extracellular side of the membrane. A helical transmembrane segment spans residues Val127–Ala147. Topologically, residues Thr148 to Leu157 are cytoplasmic. A helical membrane pass occupies residues Gly158–Gly175. The Extracellular segment spans residues Met176 to Tyr177. The discontinuously helical intramembrane region spans Tyr178–Ile193. The short motif at Asn184–Ala186 is the NPA 2 element. Topologically, residues Leu194–Asn200 are extracellular. A helical transmembrane segment spans residues His201–Leu218. The Cytoplasmic segment spans residues Tyr219–Leu263. An interaction with CALM region spans residues Leu227 to Leu237. Phosphoserine occurs at positions 235, 243, and 245. The interval Thr240–Leu263 is disordered.

The protein belongs to the MIP/aquaporin (TC 1.A.8) family. In terms of assembly, homotetramer; each monomer provides an independent water pore. Two homotetramers on opposing membranes can dimerize, forming a cell-cell junction. Interacts with CALM; the calcium-calmodulin/CALM complex interacts with the cytoplasmic domains of two aquaporins, leading to channel closure. Interacts with BFSP1 (via C-terminus); prevents calcium-dependent inhibition of the water channel activity. Post-translationally, subject to partial proteolytic cleavage in the eye lens core. Partial proteolysis promotes interactions between tetramers from adjoining membranes. In terms of processing, fatty acylated at Met-1 and Lys-238. The acyl modifications, in decreasing order of ion abundance, are: oleoyl (C18:1) &gt; palmitoyl (C16:0) &gt; stearoyl (C18:0) &gt; eicosenoyl (C20:1) &gt; dihomo-gamma-linolenoyl (C20:3) &gt; palmitoleoyl (C16:1) &gt; eicosadienoyl (C20:2). Detected in eye lens (at protein level).

The protein localises to the cell membrane. It is found in the cell junction. The catalysed reaction is H2O(in) = H2O(out). Its activity is regulated as follows. The water channel activity is inhibited by calcium through calmodulin/CALM. In terms of biological role, aquaporins form homotetrameric transmembrane channels, with each monomer independently mediating water transport across the plasma membrane along its osmotic gradient. Specifically expressed in lens fiber cells, this aquaporin is crucial for maintaining lens water homeostasis and transparency. Beyond water permeability, it also acts as a cell-to-cell adhesion molecule, forming thin junctions between lens fiber cells that are essential for maintaining the ordered structure and transparency of the lens. The sequence is that of Lens fiber major intrinsic protein from Ovis aries (Sheep).